A 269-amino-acid polypeptide reads, in one-letter code: Cytochrome c oxidase subunit 3 (269 aa).

Residues 1–22 lie on the Mitochondrial matrix side of the membrane; sequence MTHLERSRHQQHPFHMVMPSPW. The chain crosses the membrane as a helical span at residues 23–41; that stretch reads PIVVSFALLSLALSTALTM. Topologically, residues 42–48 are mitochondrial intermembrane; it reads HGYIGNM. The helical transmembrane segment at 49–73 threads the bilayer; it reads NMVYLALFVLLTSSILWFRDIVAEA. Residues 74–80 are Mitochondrial matrix-facing; the sequence is TYLGDHT. The helical transmembrane segment at 81–114 threads the bilayer; sequence MAVRKGINLGFLMFVLSEVLIFAGLFWAYFHSAM. The Mitochondrial intermembrane segment spans residues 115–137; it reads SPDVTLGACWPPVGIEAVQPTEL. The helical transmembrane segment at 138-161 threads the bilayer; sequence PLLNTIILLSSGATVTYSHHALIA. Residues 162 to 164 are Mitochondrial matrix-facing; the sequence is GNR. A helical transmembrane segment spans residues 165 to 188; sequence NKALSGLLITFWLIVIFVTCQYIE. The Mitochondrial intermembrane portion of the chain corresponds to 189–201; sequence YTNAAFTISDGVY. A helical transmembrane segment spans residues 202 to 230; that stretch reads GSVFYAGTGLHFLHMVMLAAMLGVNYWRM. Residues 231 to 248 lie on the Mitochondrial matrix side of the membrane; it reads RNYHLTAGHHVGYETTII. The helical transmembrane segment at 249–265 threads the bilayer; it reads YTHVLDVIWLFLYVVFY. The Mitochondrial intermembrane portion of the chain corresponds to 266–269; the sequence is WWGV.

It belongs to the cytochrome c oxidase subunit 3 family. As to quaternary structure, component of the cytochrome c oxidase (complex IV, CIV), a multisubunit enzyme composed of 12 subunits. The complex is composed of a catalytic core of 3 subunits COX1, COX2 and COX3, encoded in the mitochondrial DNA, and 9 supernumerary subunits COX4, COX5A (or COX5B), COX6, COX7, COX8, COX9, COX12, COX13 and COX26, which are encoded in the nuclear genome. The complex exists as a monomer or a dimer and forms supercomplexes (SCs) in the inner mitochondrial membrane with a dimer of ubiquinol-cytochrome c oxidoreductase (cytochrome b-c1 complex, complex III, CIII), resulting in 2 different assemblies (supercomplexes III(2)IV and III(2)IV(2)). In terms of processing, the N-terminus is blocked.

The protein localises to the mitochondrion inner membrane. It carries out the reaction 4 Fe(II)-[cytochrome c] + O2 + 8 H(+)(in) = 4 Fe(III)-[cytochrome c] + 2 H2O + 4 H(+)(out). In terms of biological role, component of the cytochrome c oxidase, the last enzyme in the mitochondrial electron transport chain which drives oxidative phosphorylation. The respiratory chain contains 3 multisubunit complexes succinate dehydrogenase (complex II, CII), ubiquinol-cytochrome c oxidoreductase (cytochrome b-c1 complex, complex III, CIII) and cytochrome c oxidase (complex IV, CIV), that cooperate to transfer electrons derived from NADH and succinate to molecular oxygen, creating an electrochemical gradient over the inner membrane that drives transmembrane transport and the ATP synthase. Cytochrome c oxidase is the component of the respiratory chain that catalyzes the reduction of oxygen to water. Electrons originating from reduced cytochrome c in the intermembrane space (IMS) are transferred via the dinuclear copper A center (CU(A)) of COX2 and heme A of COX1 to the active site in COX1, a binuclear center (BNC) formed by heme A3 and copper B (CU(B)). The BNC reduces molecular oxygen to 2 water molecules using 4 electrons from cytochrome c in the IMS and 4 protons from the mitochondrial matrix. COX3 is a catalytic core subunit. The chain is Cytochrome c oxidase subunit 3 (COX3) from Saccharomyces cerevisiae (strain ATCC 204508 / S288c) (Baker's yeast).